We begin with the raw amino-acid sequence, 494 residues long: Sugar phosphate exchanger 3 (494 aa).

The chain crosses the membrane as a helical span at residues 16-36; that stretch reads FSHHHVVVFLLTFFSYSLLHA. N-linked (GlcNAc...) asparagine glycosylation occurs at N58. 5 helical membrane-spanning segments follow: residues 81–101, 113–133, 147–167, 177–197, and 209–229; these read TLFL…GLFI, WVLS…GALT, LWIV…AVMG, VVFG…ACLA, and FLVT…GLLV. N266 carries N-linked (GlcNAc...) asparagine glycosylation. 6 helical membrane-spanning segments follow: residues 297 to 317, 333 to 353, 357 to 377, 386 to 406, 428 to 448, and 452 to 472; these read LAYA…PFYL, IWYD…SDVL, APVL…YSRS, LLMT…SSAI, GIVD…VSLI, and LGWM…IVFI.

The protein belongs to the major facilitator superfamily. Organophosphate:Pi antiporter (OPA) (TC 2.A.1.4) family. As to quaternary structure, interacts with ATRAID; the interaction is direct and both proteins are mutually dependent for their stability. Glycosylated. As to expression, expressed in liver, kidney, intestine and pancreas.

The protein localises to the endoplasmic reticulum membrane. It localises to the lysosome membrane. Functionally, unlike the other SLC37 members, lacks glucose-6-phosphate antiporter activity. In osteoclasts, forms a transporter complex with ATRAID for nitrogen-containing-bisphophonates (N-BPs) required for releasing N-BP molecules that have trafficked to lysosomes through fluid-phase endocytosis into the cytosol. The polypeptide is Sugar phosphate exchanger 3 (Homo sapiens (Human)).